The chain runs to 532 residues: MNLPDYSPNNSSLQWERFSELLWHNEELGLWVDISRMNVNEHELKELKPIFQKAFEAMNSLEKGSMANIDEERMVGHYWLRNPDLAPSRDISKLIANQISQIEQFTTSILSGDIRSDAGELFTDVLWIGIGGSGLGPLLLIESLQELNKGLKFHFLDNVDPIGIDKKLELLQSKLSTTLFVVVSKSGGTPEPQIAMDQARHVVETNGKNWPTRSVAITMCNSLLDNKAKQENWLKTFDLPDWVGGRTSITGAVGLLPLGLIDSDLKSFLLGASKMDELTRNNELLDNPAALMAMAWYSSGSAKGLKDMVVLPYRDSLEVFSRYLQQLVMESLGKKNDREGNIVFQGLSVYGNKGSTDQHAYVQQLRDGINNFFVTFIEVLTNNESPCLNNKLPGDYLSGFMQGTRLALSDSNRQSLTITLKTFDPLSLGALIALFERTVGLYAELININAYHQPGVEAGKKAAADILNLQLQIEDILSDYSNYSIEQISTRLSSSNSESIYFILRNLVFNNKYSAKGSWKNPSSLIFKREKL.

Glu-330 functions as the Proton donor in the catalytic mechanism. Catalysis depends on residues His-359 and Lys-460.

This sequence belongs to the GPI family.

It is found in the cytoplasm. The enzyme catalyses alpha-D-glucose 6-phosphate = beta-D-fructose 6-phosphate. The protein operates within carbohydrate biosynthesis; gluconeogenesis. Its pathway is carbohydrate degradation; glycolysis; D-glyceraldehyde 3-phosphate and glycerone phosphate from D-glucose: step 2/4. Functionally, catalyzes the reversible isomerization of glucose-6-phosphate to fructose-6-phosphate. The protein is Glucose-6-phosphate isomerase of Prochlorococcus marinus (strain MIT 9211).